A 615-amino-acid chain; its full sequence is Probable inactive purple acid phosphatase 24 (615 aa).

An N-terminal signal peptide occupies residues methionine 1 to glycine 26. Asparagine 129, asparagine 267, and asparagine 275 each carry an N-linked (GlcNAc...) asparagine glycan. Residue aspartate 297 coordinates Fe cation. N-linked (GlcNAc...) asparagine glycosylation occurs at asparagine 318. Positions 338 and 341 each coordinate Fe cation. Residue aspartate 338 participates in Zn(2+) binding. Zn(2+)-binding residues include asparagine 371, histidine 460, and histidine 502. Asparagine 371 provides a ligand contact to substrate. Histidine 502–histidine 504 lines the substrate pocket. Residue histidine 504 coordinates Fe cation. A glycan (N-linked (GlcNAc...) asparagine) is linked at asparagine 592.

The protein belongs to the metallophosphoesterase superfamily. Purple acid phosphatase family. In terms of assembly, homodimer. Requires Fe cation as cofactor. Zn(2+) serves as cofactor. As to expression, specifically expressed in flowers.

It is found in the secreted. The protein is Probable inactive purple acid phosphatase 24 (PAP24) of Arabidopsis thaliana (Mouse-ear cress).